Here is a 325-residue protein sequence, read N- to C-terminus: Pyruvate dehydrogenase E1 component subunit beta (325 aa).

Glu-60 lines the thiamine diphosphate pocket.

As to quaternary structure, heterodimer of an alpha and a beta chain. Thiamine diphosphate is required as a cofactor.

The protein resides in the cytoplasm. Its subcellular location is the secreted. It catalyses the reaction N(6)-[(R)-lipoyl]-L-lysyl-[protein] + pyruvate + H(+) = N(6)-[(R)-S(8)-acetyldihydrolipoyl]-L-lysyl-[protein] + CO2. With respect to regulation, activity of the E1 module is inhibited by the pyruvate dehydrogenase inhibitor PdhI. Its function is as follows. The pyruvate dehydrogenase complex catalyzes the overall conversion of pyruvate to acetyl-CoA and CO(2). It contains multiple copies of three enzymatic components: pyruvate dehydrogenase (E1), dihydrolipoamide acetyltransferase (E2) and lipoamide dehydrogenase (E3). Functionally, the B.subtilis PDH complex also possesses branched-chain 2-oxoacid dehydrogenase (BCDH) activity. The sequence is that of Pyruvate dehydrogenase E1 component subunit beta from Bacillus subtilis (strain 168).